Reading from the N-terminus, the 604-residue chain is Glutamine--fructose-6-phosphate aminotransferase [isomerizing] (604 aa).

The active-site Nucleophile; for GATase activity is Cys2. The Glutamine amidotransferase type-2 domain maps to Cys2–Asp218. SIS domains are found at residues Ile284–Lys423 and Val456–Pro594. Lys599 acts as the For Fru-6P isomerization activity in catalysis.

Homodimer.

It is found in the cytoplasm. It carries out the reaction D-fructose 6-phosphate + L-glutamine = D-glucosamine 6-phosphate + L-glutamate. Catalyzes the first step in hexosamine metabolism, converting fructose-6P into glucosamine-6P using glutamine as a nitrogen source. The polypeptide is Glutamine--fructose-6-phosphate aminotransferase [isomerizing] (Streptococcus pyogenes serotype M1).